Reading from the N-terminus, the 1620-residue chain is ABC-type organic anion transporter ABCA8A (1620 aa).

The next 7 membrane-spanning stretches (helical) occupy residues 30–50 (TFLEFLYTALILLSLILFLQL), 224–244 (CFLFFCIIRFSPLTYYISAGV), 263–283 (SAFWLSWGLLYGVIVFVVTLL), 294–314 (VFLTGFMVIFSLFFFYGLSLI), 328–348 (FLTDLVVFLLTVSCGSLGFTA), 357–377 (LEWLLSLLSPFAFMLGMVQLL), and 397–417 (IGTIFMLFFDGVFYLLLTFYF). N-linked (GlcNAc...) asparagine glycosylation is found at Asn-454 and Asn-482. In terms of domain architecture, ABC transporter 1 spans 478–713 (IRIRNLTKDY…WGIGYHLSLQ (236 aa)). 514–521 (GHSGAGKS) lines the ATP pocket. The helical transmembrane segment at 861 to 881 (IVILILVLGIGLLHILSANIY) threads the bilayer. N-linked (GlcNAc...) asparagine glycosylation occurs at Asn-967. A run of 7 helical transmembrane segments spans residues 979–999 (CFPVLVDIVSNGLLGLFAPSA), 1019–1039 (YLAYFFLWVLLMACVPPYISM), 1068–1088 (ALFEVPVYCALILSIFIAFYA), 1105–1125 (ILYVGGYAMSVIFMTYVISFI), 1133–1153 (SGLWSLCFYIVSFFSMCFMLI), 1159–1179 (ISLFVLIALVPPATLGGCTLL), and 1196–1216 (EYSYLFFLAPLLHFAIFVVIL). The 234-residue stretch at 1284-1517 (LRKEYKGKKK…FGKEYLLEMK (234 aa)) folds into the ABC transporter 2 domain. 1322-1329 (GHNGAGKS) is a binding site for ATP.

Belongs to the ABC transporter superfamily. ABCA family. Expressed in lung, heart, liver, skeletal muscle and testis. Highly expressed in the liver, and is also abundant in heart and skeletal muscle. Highly expressed in heart.

It is found in the cell membrane. Its subcellular location is the basolateral cell membrane. The catalysed reaction is taurocholate(in) + ATP + H2O = taurocholate(out) + ADP + phosphate + H(+). It carries out the reaction cholesterol(in) + ATP + H2O = cholesterol(out) + ADP + phosphate + H(+). Its activity is regulated as follows. Cholesterol efflux is increased by extracellularly applied taurocholate. Functionally, mediates cholesterol and taurocholate efflux. Through the interaction with ABCA1 potentiates the cholesterol efflux to lipid-free APOA1, in turn regulates high-density lipoprotein cholesterol levels. The polypeptide is ABC-type organic anion transporter ABCA8A (Mus musculus (Mouse)).